The primary structure comprises 119 residues: C-X-C motif chemokine 17 (119 aa).

The first 21 residues, M1–S21, serve as a signal peptide directing secretion. 2 cysteine pairs are disulfide-bonded: C75/C103 and C77/C110. Residues K81 to S100 form a disordered region. A compositionally biased stretch (basic residues) spans G82–S100.

This sequence belongs to the intercrine alpha (chemokine CxC) family. In terms of processing, likely to undergo an endoproteolytic process to form a four-cysteine-containing mature peptide with a canonical CXC chemokine scaffold after secretion. Detected in trachea, stomach, lung and skeletal muscle. Detected in intestine and in normal and asthmatic lung (at protein level). Breast tumors showed 3- to 24-fold up-regulation.

Its subcellular location is the secreted. Its function is as follows. Chemokine that acts as a chemoattractant for monocytes, macrophages and dendritic cells. Plays a role in angiogenesis and possibly in the development of tumors. Acts as an anti-inflammatory in the stomach. May play a role in the innate defense against infections. Activates the C-X-C chemokine receptor GPR35 to induce a rapid and transient rise in the level of intracellular calcium ions. In terms of biological role, seems to exhibit much higher chemoattractant potency on monocytes and macrophages than 6-Cys CXCL17. The polypeptide is C-X-C motif chemokine 17 (CXCL17) (Homo sapiens (Human)).